A 378-amino-acid chain; its full sequence is Putative gustatory receptor 22f (378 aa).

The Cytoplasmic segment spans residues 1-13 (MKMFQPRRGFSCH). A helical transmembrane segment spans residues 14-34 (LAWFMLQTTLYASWLLGLFPF). Residues 35–48 (TFDSRRKQLKRSRW) lie on the Extracellular side of the membrane. Residues 49–69 (LLLYGFVLHSLAMCLAMSSHL) traverse the membrane as a helical segment. The Cytoplasmic portion of the chain corresponds to 70-88 (ASKQRRKYNAFERNPLLEK). Residues 89–109 (IYMQFQVTTFFTISVLLLMNV) form a helical membrane-spanning segment. Residues 110–143 (WKSNTVRKIANELLTLEGQVKDLLTLKNCPNFNC) lie on the Extracellular side of the membrane. A helical membrane pass occupies residues 144–164 (FVIKKHVAAIGQFVISIYFCL). At 165-178 (CQENSYPKILKILC) the chain is on the cytoplasmic side. Residues 179–199 (CLPSVGLQLIIMHFHTEIILV) form a helical membrane-spanning segment. The Extracellular portion of the chain corresponds to 200-245 (YRYVWLVNETLEDSHHLSSSRIHALASLYDRLLKLSELVVACNDLQ). N-linked (GlcNAc...) asparagine glycosylation is present at Asn207. Residues 246-266 (LILMLIIYLIGNTVQIFFLIV) form a helical membrane-spanning segment. At 267–354 (LGVSMNKRYI…LCGLFSINHN (88 aa)) the chain is on the cytoplasmic side. Residues 355–375 (MGFQMIITSFLYLVYLLQFDF) traverse the membrane as a helical segment. The Extracellular portion of the chain corresponds to 376–378 (MNL).

Belongs to the insect chemoreceptor superfamily. Gustatory receptor (GR) family. Gr22e subfamily. As to expression, taste bristles in the foreleg and labial palps.

The protein localises to the cell membrane. Functionally, probable gustatory receptor which mediates acceptance or avoidance behavior, depending on its substrates. The polypeptide is Putative gustatory receptor 22f (Gr22f) (Drosophila melanogaster (Fruit fly)).